Here is a 362-residue protein sequence, read N- to C-terminus: MSPTVTVQLTDDTAKRFEGHAKLLAIGTATPTNWVDQATYPDFYFRITNSERLLEHKEKFRRICNKSKIRFRHLVLTEELLKKSPNLCTYNDASLNTRQDILVSEVPKLGKEAAMKAIKEWGRPISEITHLVFCTTSGVDMPGADFQLTKLLGLNSSVKRLMMYQQGCNAGAAMLRLVKDLAENNKGARVLVVCSEITINIFRGPSLEQDDNLLAQCLFGDGSAAMIVGKDPRPGLETPLFELVSSAQTIVPNTDSHLKLTLREMGLTFHCSRAVPSVLAENVEDCLVKAFEPYGISDWNSIFWVFHPGGYAIVDRVEERLGLGPERLRASRDVLSEYGNLTSACVLFILDEMRKKSKKDEQ.

The active site involves Cys168.

Belongs to the thiolase-like superfamily. Chalcone/stilbene synthases family.

The enzyme catalyses (E)-4-coumaroyl-CoA + 3 malonyl-CoA + 3 H(+) = 2',4,4',6'-tetrahydroxychalcone + 3 CO2 + 4 CoA. It participates in secondary metabolite biosynthesis; flavonoid biosynthesis. In terms of biological role, the primary product of this enzyme is 4,2',4',6'-tetrahydroxychalcone (also termed naringenin-chalcone or chalcone) which can under specific conditions spontaneously isomerize into naringenin. The sequence is that of Chalcone synthase A (CHSA) from Ipomoea triloba (Trilobed morning glory).